An 831-amino-acid polypeptide reads, in one-letter code: DNA ligase (831 aa).

Residues 34–38, 83–84, and glutamate 114 contribute to the NAD(+) site; these read DADYD and SL. The active-site N6-AMP-lysine intermediate is lysine 116. Arginine 137, glutamate 174, lysine 291, and lysine 315 together coordinate NAD(+). Cysteine 409, cysteine 412, cysteine 427, and cysteine 433 together coordinate Zn(2+). The BRCT domain occupies 749–831; sequence AHTAPLNGQS…LAFLGQYSAQ (83 aa).

It belongs to the NAD-dependent DNA ligase family. LigA subfamily. Mg(2+) serves as cofactor. It depends on Mn(2+) as a cofactor.

The enzyme catalyses NAD(+) + (deoxyribonucleotide)n-3'-hydroxyl + 5'-phospho-(deoxyribonucleotide)m = (deoxyribonucleotide)n+m + AMP + beta-nicotinamide D-nucleotide.. Its function is as follows. DNA ligase that catalyzes the formation of phosphodiester linkages between 5'-phosphoryl and 3'-hydroxyl groups in double-stranded DNA using NAD as a coenzyme and as the energy source for the reaction. It is essential for DNA replication and repair of damaged DNA. This is DNA ligase from Xylella fastidiosa (strain 9a5c).